Here is a 178-residue protein sequence, read N- to C-terminus: Putative peroxiredoxin in rubredoxin operon (178 aa).

One can recognise a Thioredoxin domain in the interval 3–163; sequence RLVGKPAPEF…TLRVLKAFQT (161 aa). C50 serves as the catalytic Cysteine sulfenic acid (-SOH) intermediate.

The protein belongs to the peroxiredoxin family. AhpC/Prx1 subfamily. In terms of assembly, homodimer; disulfide-linked, upon oxidation.

The protein resides in the cytoplasm. It carries out the reaction a hydroperoxide + [protein]-dithiol = [protein]-disulfide + an alcohol + H2O. Its function is as follows. Thiol-specific peroxidase that catalyzes the reduction of hydrogen peroxide and organic hydroperoxides to water and alcohols, respectively. Plays a role in cell protection against oxidative stress by detoxifying peroxides. The chain is Putative peroxiredoxin in rubredoxin operon from Clostridium pasteurianum.